The primary structure comprises 418 residues: (+)-T-muurolol synthase ((2E,6E)-farnesyl diphosphate cyclizing) (418 aa).

Mg(2+) is bound by residues aspartate 83 and aspartate 88. Positions 83-88 match the DDXXXD motif motif; the sequence is DDEYCD. Arginine 179 is a binding site for substrate. The Mg(2+) site is built by asparagine 225 and serine 229. Residue lysine 232 participates in substrate binding. Glutamate 233 contributes to the Mg(2+) binding site. 312–313 provides a ligand contact to substrate; the sequence is RY. A disordered region spans residues 354-418; the sequence is LPEPGSDGAD…QQSTWRREHR (65 aa). Residues 402-412 show a composition bias toward polar residues; the sequence is ASRSSGLQQST.

Belongs to the terpene synthase family. Mg(2+) serves as cofactor.

It carries out the reaction (2E,6E)-farnesyl diphosphate + H2O = (+)-T-muurolol + diphosphate. It functions in the pathway secondary metabolite biosynthesis; terpenoid biosynthesis. Catalyzes the conversion of (2E,6E)-farnesyl diphosphate (FPP) into (+)-T-muurolol via a 1,10-cyclization, which requires isomerization of FPP to nerolidyl diphosphate (NPP) and then abstraction of the pyrophosphate from intermediate NPP leading to a (E,Z)-germacradienyl (helminthogermacradienyl) cation. The polypeptide is (+)-T-muurolol synthase ((2E,6E)-farnesyl diphosphate cyclizing) (Streptomyces clavuligerus).